The primary structure comprises 137 residues: Small ribosomal subunit protein uS9 (137 aa).

Residues 114 to 137 (DSRMKERKKPGLRGARRGVQFSKR) are disordered. Positions 118 to 137 (KERKKPGLRGARRGVQFSKR) are enriched in basic residues.

The protein belongs to the universal ribosomal protein uS9 family.

This Rhodopirellula baltica (strain DSM 10527 / NCIMB 13988 / SH1) protein is Small ribosomal subunit protein uS9.